We begin with the raw amino-acid sequence, 97 residues long: Putative defensin-like protein 240 (97 aa).

Positions 1–23 (MRYTTSFIVFCFYIFLFTNLVQG) are cleaved as a signal peptide. 4 cysteine pairs are disulfide-bonded: Cys29–Cys88, Cys39–Cys69, Cys47–Cys85, and Cys67–Cys87.

The protein belongs to the DEFL family.

It is found in the secreted. The protein is Putative defensin-like protein 240 (SCRL18) of Arabidopsis thaliana (Mouse-ear cress).